The primary structure comprises 169 residues: uncharacterized protein (169 aa).

This is an uncharacterized protein from Azospirillum brasilense.